We begin with the raw amino-acid sequence, 219 residues long: Formate dehydrogenase 2 subunit beta (cytochrome c-553) (219 aa).

One can recognise a 4Fe-4S ferredoxin-type 1 domain in the interval 3–32 (KAFLIDTTRCTACRGCQLACKEWHDLPANV). 12 residues coordinate [4Fe-4S] cluster: Cys-12, Cys-15, Cys-18, Cys-22, Cys-74, Cys-77, Cys-82, Cys-124, Cys-141, Cys-144, Cys-156, and Cys-160. A 4Fe-4S ferredoxin-type 2 domain is found at 132 to 171 (DPKTKRITKCDMCFDRVSAGMQPICVKTCPTGTMAFGERD).

In terms of assembly, heterotrimer of cytochrome c3 FDH2C and formate dehydrogenase FDH2 alpha and beta subunits that forms the FdhABC(3) complex. Requires [4Fe-4S] cluster as cofactor.

It localises to the periplasm. Functionally, beta chain of the formate dehydrogenase (FDH) that catalyzes the reversible two-electron oxidation of formate to carbon dioxide. The beta chain is an electron transfer unit. The chain is Formate dehydrogenase 2 subunit beta (cytochrome c-553) from Nitratidesulfovibrio vulgaris (strain ATCC 29579 / DSM 644 / CCUG 34227 / NCIMB 8303 / VKM B-1760 / Hildenborough) (Desulfovibrio vulgaris).